Reading from the N-terminus, the 350-residue chain is Bifunctional nitrilase/nitrile hydratase NIT4B (350 aa).

The 273-residue stretch at 30–302 folds into the CN hydrolase domain; sequence VRATVVQAST…EALISADLDL (273 aa). The active-site Proton acceptor is Glu-70. Residue Lys-157 is part of the active site. The active-site Nucleophile is Cys-191.

The protein belongs to the carbon-nitrogen hydrolase superfamily. Nitrilase family. Highly expressed in leaves and cotyledons, lower expression in stems and roots.

It carries out the reaction L-asparagine = 3-cyano-L-alanine + H2O. It catalyses the reaction 3-cyano-L-alanine + 2 H2O = L-aspartate + NH4(+). Functionally, involved in the cyanide detoxification pathway. Has nitrilase and nitrile-hydratase activity in the ratio 3.3:1, producing both asparagine and aspartic acid from beta-cyano-L-alanine (Ala(CN)). Can also use 3-phenylpropionitrile as substrate, but not indole-3-acetonitrile. In Lupinus angustifolius (Narrow-leaved blue lupine), this protein is Bifunctional nitrilase/nitrile hydratase NIT4B (NIT4B).